We begin with the raw amino-acid sequence, 228 residues long: Probable endo-1,4-beta-xylanase A (228 aa).

A signal peptide spans 1-18 (MVSFSYLLLACSAIGALA). N-linked (GlcNAc...) asparagine glycosylation occurs at asparagine 29. The GH11 domain occupies 40 to 228 (AGTPSSTGWN…SSGSASITVY (189 aa)). Catalysis depends on glutamate 124, which acts as the Nucleophile. Residue glutamate 215 is the Proton donor of the active site.

It belongs to the glycosyl hydrolase 11 (cellulase G) family.

It localises to the secreted. The enzyme catalyses Endohydrolysis of (1-&gt;4)-beta-D-xylosidic linkages in xylans.. The protein operates within glycan degradation; xylan degradation. In terms of biological role, endo-1,4-beta-xylanase involved in the hydrolysis of xylan, a major structural heterogeneous polysaccharide found in plant biomass representing the second most abundant polysaccharide in the biosphere, after cellulose. The protein is Probable endo-1,4-beta-xylanase A (xlnA) of Aspergillus fumigatus (strain CBS 144.89 / FGSC A1163 / CEA10) (Neosartorya fumigata).